The chain runs to 859 residues: Nitrate reductase [NADPH] (859 aa).

Mo-molybdopterin is bound at residue Cys-137. A Cytochrome b5 heme-binding domain is found at 502–578 (DVVIKYSEFE…LPSMHLGRLE (77 aa)). Residues His-538 and His-561 each contribute to the heme site. An FAD-binding FR-type domain is found at 602–713 (RKWHKITLAE…KGPVGEFEYV (112 aa)). FAD-binding positions include 655-658 (RAYT), 672-676 (LIKVY), Phe-677, 687-689 (IMT), Ser-737, and Thr-740. 829 to 838 (MLLVCGPPGM) serves as a coordination point for NADP(+).

It belongs to the nitrate reductase family. Homodimer. Requires FAD as cofactor. Heme is required as a cofactor. Mo-molybdopterin serves as cofactor.

It carries out the reaction nitrite + NADP(+) + H2O = nitrate + NADPH + H(+). Its function is as follows. Nitrate reductase is a key enzyme involved in the first step of nitrate assimilation in plants, fungi and bacteria. In Pichia angusta (Yeast), this protein is Nitrate reductase [NADPH] (YNR1).